A 423-amino-acid chain; its full sequence is uncharacterized protein (423 aa).

Belongs to the asfivirus E423R family.

Its subcellular location is the virion. This is an uncharacterized protein from African swine fever virus (isolate Tick/South Africa/Pretoriuskop Pr4/1996) (ASFV).